A 529-amino-acid chain; its full sequence is MSTRLEREVARRRTFAIISHPDAGKTTLTEKLLLFGGAIQMAGAVKARKSGRHATSDWMAMERERGISVTTSVMQFPYGDHMVNLLDTPGHQDFSEDTYRVLTAVDSALVVIDVAKGVEAQTRKLMDVCRLRDTPVMTFINKLDRDGLPPLDVMADIEENLRIECVPLTWPIGMGSDFKGTYNLLKRELHLFSASHHGRIQEGILIRDLDDPLLDEHLGPQADALRMDLALLEEAGTPFSREKYLRGEQTPVFFGSAINNFGVRELLDNFVDLAPAPRPRPAITREVSPHEESFTGVVFKIQANMDKAHRDRMAFMRICSGTFTRGMKLRHHRVGKDVTVANATIFLAQDRSGVEEAFPGDIIGIPNHGTIKIGDTFTESKEELKFTGIPSFSPEHFRRVRLRNPLKAKQLQKGLEQLAEEGAVQLFRPQVNNDYILGAVGVLQFDVIISRLHDEYSVEAAYEPCSIHTARWLHCNDRKVFAEFCDYYSAELAIDAEGALAYLAPNPWRLESAMERYPAVEFRTTREIR.

Residues 10–278 (ARRRTFAIIS…NFVDLAPAPR (269 aa)) form the tr-type G domain. Residues 19–26 (SHPDAGKT), 87–91 (DTPGH), and 141–144 (NKLD) each bind GTP.

This sequence belongs to the TRAFAC class translation factor GTPase superfamily. Classic translation factor GTPase family. PrfC subfamily.

It localises to the cytoplasm. Functionally, increases the formation of ribosomal termination complexes and stimulates activities of RF-1 and RF-2. It binds guanine nucleotides and has strong preference for UGA stop codons. It may interact directly with the ribosome. The stimulation of RF-1 and RF-2 is significantly reduced by GTP and GDP, but not by GMP. This Nitratidesulfovibrio vulgaris (strain ATCC 29579 / DSM 644 / CCUG 34227 / NCIMB 8303 / VKM B-1760 / Hildenborough) (Desulfovibrio vulgaris) protein is Peptide chain release factor 3.